Reading from the N-terminus, the 218-residue chain is Adenylate kinase (218 aa).

10-15 (GAGKGT) lines the ATP pocket. Residues 30-59 (STGDMLRAAIAKGTPLGLSAQKIMESGGLV) are NMP. AMP is bound by residues T31, R36, 57 to 59 (GLV), 85 to 88 (GFPR), and Q92. Residues 122 to 159 (GRRIHQPSGRVYHVVNQPPKNPGVDDITGEPLIQRDDD) form an LID region. ATP is bound by residues R123 and 132 to 133 (VY). R156 and R167 together coordinate AMP. Residue G203 coordinates ATP.

This sequence belongs to the adenylate kinase family. In terms of assembly, monomer.

The protein resides in the cytoplasm. The catalysed reaction is AMP + ATP = 2 ADP. It functions in the pathway purine metabolism; AMP biosynthesis via salvage pathway; AMP from ADP: step 1/1. In terms of biological role, catalyzes the reversible transfer of the terminal phosphate group between ATP and AMP. Plays an important role in cellular energy homeostasis and in adenine nucleotide metabolism. This is Adenylate kinase from Legionella pneumophila (strain Lens).